The primary structure comprises 251 residues: MSEGTQNSTHFGYKTVEAEQKADMVAGVFHSVAAKYDIMNDVMSFGIHRMWKRFTIESAGARPGMKVLDLAGGTGDLTAKFSHLVGDKGQVTLADINDSMLKVGREKLRDKGIVGNVNYVQANAEALPFPDNHFDIITIAFGLRNVTDKDSAIRSMLRVLKPGGKLLILEFSKPQHDVMRKIYDLYSFKILPKMGSLITQDAESYEYLAESIRMHPDQDTLKGMMVDAGFEQVEYTNMTDGIVALHKGYKF.

S-adenosyl-L-methionine is bound by residues threonine 74, aspartate 95, and 123 to 124 (NA).

The protein belongs to the class I-like SAM-binding methyltransferase superfamily. MenG/UbiE family.

It catalyses the reaction a 2-demethylmenaquinol + S-adenosyl-L-methionine = a menaquinol + S-adenosyl-L-homocysteine + H(+). The catalysed reaction is a 2-methoxy-6-(all-trans-polyprenyl)benzene-1,4-diol + S-adenosyl-L-methionine = a 5-methoxy-2-methyl-3-(all-trans-polyprenyl)benzene-1,4-diol + S-adenosyl-L-homocysteine + H(+). It participates in quinol/quinone metabolism; menaquinone biosynthesis; menaquinol from 1,4-dihydroxy-2-naphthoate: step 2/2. It functions in the pathway cofactor biosynthesis; ubiquinone biosynthesis. Functionally, methyltransferase required for the conversion of demethylmenaquinol (DMKH2) to menaquinol (MKH2) and the conversion of 2-polyprenyl-6-methoxy-1,4-benzoquinol (DDMQH2) to 2-polyprenyl-3-methyl-6-methoxy-1,4-benzoquinol (DMQH2). The sequence is that of Ubiquinone/menaquinone biosynthesis C-methyltransferase UbiE from Shewanella sediminis (strain HAW-EB3).